The chain runs to 270 residues: NAD kinase (270 aa).

The Proton acceptor role is filled by D49. NAD(+) contacts are provided by residues D49–G50, R54, N126–E127, R152, D154, T165–S170, A189, and Q227.

It belongs to the NAD kinase family. A divalent metal cation serves as cofactor.

It is found in the cytoplasm. It carries out the reaction NAD(+) + ATP = ADP + NADP(+) + H(+). In terms of biological role, involved in the regulation of the intracellular balance of NAD and NADP, and is a key enzyme in the biosynthesis of NADP. Catalyzes specifically the phosphorylation on 2'-hydroxyl of the adenosine moiety of NAD to yield NADP. This Lactococcus lactis subsp. lactis (strain IL1403) (Streptococcus lactis) protein is NAD kinase.